The chain runs to 145 residues: Transcription antitermination protein NusB (145 aa).

It belongs to the NusB family.

Its function is as follows. Involved in transcription antitermination. Required for transcription of ribosomal RNA (rRNA) genes. Binds specifically to the boxA antiterminator sequence of the ribosomal RNA (rrn) operons. In Burkholderia vietnamiensis (strain G4 / LMG 22486) (Burkholderia cepacia (strain R1808)), this protein is Transcription antitermination protein NusB.